A 340-amino-acid chain; its full sequence is Phospho-N-acetylmuramoyl-pentapeptide-transferase (340 aa).

10 helical membrane passes run 3–23 (MSLIAGVAAFVLTVLAMPHFI), 53–73 (GGTVFLVVAILISLIFNFHVF), 79–99 (AYGATAGILFVILIYGIIGFL), 119–139 (MALQIVAGLLFYFIHVLPSGT), 144–164 (IGGLTIQLGVFYVLFVLFWIV), 176–196 (IDGLASVSVVISLIAYGIIAF), 200–220 (ELAILTIIITMIGALLGFFVF), 227–247 (VFMGDVGSLSLGAMLAVISIA), 250–270 (VEWTLLLIGVVYVLETASVML), and 315–335 (VDAFLWTIGALASSITLWMVL).

Belongs to the glycosyltransferase 4 family. MraY subfamily. Requires Mg(2+) as cofactor.

The protein resides in the cell membrane. It catalyses the reaction UDP-N-acetyl-alpha-D-muramoyl-L-alanyl-gamma-D-glutamyl-L-lysyl-D-alanyl-D-alanine + di-trans,octa-cis-undecaprenyl phosphate = Mur2Ac(oyl-L-Ala-gamma-D-Glu-L-Lys-D-Ala-D-Ala)-di-trans,octa-cis-undecaprenyl diphosphate + UMP. Its pathway is cell wall biogenesis; peptidoglycan biosynthesis. Catalyzes the initial step of the lipid cycle reactions in the biosynthesis of the cell wall peptidoglycan: transfers peptidoglycan precursor phospho-MurNAc-pentapeptide from UDP-MurNAc-pentapeptide onto the lipid carrier undecaprenyl phosphate, yielding undecaprenyl-pyrophosphoryl-MurNAc-pentapeptide, known as lipid I. This is Phospho-N-acetylmuramoyl-pentapeptide-transferase from Streptococcus thermophilus (strain ATCC BAA-250 / LMG 18311).